Reading from the N-terminus, the 741-residue chain is Cysteine--tRNA ligase, cytoplasmic (741 aa).

Position 46 (Cys46) interacts with Zn(2+). The 'HIGH' region motif lies at 48–58; the sequence is PTVYDASHMGH. Phosphoserine is present on Ser297. Zn(2+)-binding residues include Cys340, His365, and Glu369. The 'KMSKS' region motif lies at 398–402; the sequence is KMSKS. An ATP-binding site is contributed by Lys401. The disordered stretch occupies residues 697-718; sequence FDENGLPTHDKEGKEVSKGQIK. The span at 704 to 713 shows a compositional bias: basic and acidic residues; that stretch reads THDKEGKEVS.

It belongs to the class-I aminoacyl-tRNA synthetase family. The cofactor is Zn(2+).

It localises to the cytoplasm. The enzyme catalyses tRNA(Cys) + L-cysteine + ATP = L-cysteinyl-tRNA(Cys) + AMP + diphosphate. In Drosophila melanogaster (Fruit fly), this protein is Cysteine--tRNA ligase, cytoplasmic.